A 415-amino-acid chain; its full sequence is Gamma-glutamyl phosphate reductase (415 aa).

The protein belongs to the gamma-glutamyl phosphate reductase family.

The protein resides in the cytoplasm. It catalyses the reaction L-glutamate 5-semialdehyde + phosphate + NADP(+) = L-glutamyl 5-phosphate + NADPH + H(+). The protein operates within amino-acid biosynthesis; L-proline biosynthesis; L-glutamate 5-semialdehyde from L-glutamate: step 2/2. In terms of biological role, catalyzes the NADPH-dependent reduction of L-glutamate 5-phosphate into L-glutamate 5-semialdehyde and phosphate. The product spontaneously undergoes cyclization to form 1-pyrroline-5-carboxylate. The polypeptide is Gamma-glutamyl phosphate reductase (Bacteroides fragilis (strain YCH46)).